Reading from the N-terminus, the 1020-residue chain is Sodium/potassium-transporting ATPase subunit alpha-2 (1020 aa).

Residues Met-1–Ala-5 constitute a propeptide that is removed on maturation. The tract at residues Met-1 to Asp-31 is disordered. Over Gly-6–Pro-85 the chain is Cytoplasmic. Position 10 is a phosphoserine (Ser-10). Residues Pro-80–Pro-82 are interaction with phosphoinositide-3 kinase. The helical transmembrane segment at Glu-86–Ala-106 threads the bilayer. Residues Ile-107–Tyr-129 lie on the Extracellular side of the membrane. A helical membrane pass occupies residues Leu-130–Ala-150. At Lys-151–Ile-286 the chain is on the cytoplasmic side. Over residues Asp-212–Pro-227 the composition is skewed to polar residues. The segment at Asp-212–His-231 is disordered. A helical transmembrane segment spans residues Glu-287–Val-306. The Extracellular portion of the chain corresponds to Leu-307–Ala-318. The helical transmembrane segment at Val-319 to Ala-336 threads the bilayer. Residues Thr-337–Leu-769 are Cytoplasmic-facing. Asp-374 functions as the 4-aspartylphosphate intermediate in the catalytic mechanism. A phosphoserine mark is found at Ser-439, Ser-450, Ser-496, and Ser-559. At Thr-570 the chain carries Phosphothreonine. A phosphoserine mark is found at Ser-587 and Ser-672. Mg(2+) is bound by residues Asp-714 and Asp-718. Residues Lys-770–Leu-789 traverse the membrane as a helical segment. Residues Phe-790–Leu-799 are Extracellular-facing. The chain crosses the membrane as a helical span at residues Gly-800 to Ala-820. The Cytoplasmic segment spans residues Tyr-821–Lys-840. The residue at position 826 (Ser-826) is a Phosphoserine. The chain crosses the membrane as a helical span at residues Leu-841–Phe-863. The Extracellular portion of the chain corresponds to Phe-864–Cys-915. The chain crosses the membrane as a helical span at residues His-916–Lys-935. Residues Thr-936–Asn-948 are Cytoplasmic-facing. A Phosphoserine; by PKA modification is found at Ser-940. The helical transmembrane segment at Lys-949 to Tyr-967 threads the bilayer. The Extracellular portion of the chain corresponds to Cys-968–Val-982. Residues Thr-983–Lys-1003 traverse the membrane as a helical segment. Residues Leu-1004–Tyr-1020 are Cytoplasmic-facing.

This sequence belongs to the cation transport ATPase (P-type) (TC 3.A.3) family. Type IIC subfamily. The sodium/potassium-transporting ATPase is composed of a catalytic alpha subunit, an auxiliary non-catalytic beta subunit and an additional regulatory subunit. Interacts with regulatory subunit FXYD1.

It is found in the membrane. The protein resides in the cell membrane. It carries out the reaction K(+)(out) + Na(+)(in) + ATP + H2O = K(+)(in) + Na(+)(out) + ADP + phosphate + H(+). In terms of biological role, this is the catalytic component of the active enzyme, which catalyzes the hydrolysis of ATP coupled with the exchange of sodium and potassium ions across the plasma membrane. This action creates the electrochemical gradient of sodium and potassium, providing the energy for active transport of various nutrients. The protein is Sodium/potassium-transporting ATPase subunit alpha-2 (ATP1A2) of Pongo abelii (Sumatran orangutan).